The chain runs to 249 residues: Segregation and condensation protein A (249 aa).

This sequence belongs to the ScpA family. Component of a cohesin-like complex composed of ScpA, ScpB and the Smc homodimer, in which ScpA and ScpB bind to the head domain of Smc. The presence of the three proteins is required for the association of the complex with DNA.

Its subcellular location is the cytoplasm. Functionally, participates in chromosomal partition during cell division. May act via the formation of a condensin-like complex containing Smc and ScpB that pull DNA away from mid-cell into both cell halves. The polypeptide is Segregation and condensation protein A (Mycoplasmopsis pulmonis (strain UAB CTIP) (Mycoplasma pulmonis)).